The chain runs to 245 residues: Bis(5'-nucleosyl)-tetraphosphatase PrpE [asymmetrical] (245 aa).

This sequence belongs to the PrpE family. It depends on Ni(2+) as a cofactor.

It carries out the reaction P(1),P(4)-bis(5'-guanosyl) tetraphosphate + H2O = GMP + GTP + 2 H(+). In terms of biological role, asymmetrically hydrolyzes Ap4p to yield AMP and ATP. This is Bis(5'-nucleosyl)-tetraphosphatase PrpE [asymmetrical] from Anoxybacillus flavithermus (strain DSM 21510 / WK1).